The following is a 738-amino-acid chain: Envelope glycoprotein gp160 (738 aa).

An N-terminal signal peptide occupies residues 1–21 (MCGKSLLCVASLLASAYLVYC). At 22-670 (TQYVTVFYGV…LTSWIKYIQY (649 aa)) the chain is on the extracellular side. Asn-36 carries N-linked (GlcNAc...) asparagine; by host glycosylation. A disulfide bridge links Cys-43 with Cys-56. 23 N-linked (GlcNAc...) asparagine; by host glycosylation sites follow: Asn-69, Asn-113, Asn-117, Asn-118, Asn-132, Asn-141, Asn-169, Asn-182, Asn-197, Asn-229, Asn-232, Asn-263, Asn-269, Asn-280, Asn-291, Asn-301, Asn-356, Asn-362, Asn-389, Asn-402, Asn-439, Asn-454, and Asn-457. Intrachain disulfides connect Cys-100/Cys-205, Cys-107/Cys-196, Cys-112/Cys-153, Cys-218/Cys-248, and Cys-228/Cys-240. The interval 112–152 (CNSTTNNTTTTGSTTGMSEINETSPSYSDNCTGLGKEEIVN) is V1. Residues 153 to 196 (CQFYMTGLERDKKKQYNETWYSKDVVCESNNTKDGKNRCYMNHC) form a V2 region. The segment at 296 to 328 (CKRPGNKTVVPITLMSGLVFHSQPINTRPRQAW) is V3. Cys-296 and Cys-329 are disulfide-bonded. 2 disulfide bridges follow: Cys-381-Cys-438 and Cys-388-Cys-411. The interval 388–411 (CNMTWFLNWVENRPNQTQHNYAPC) is V4. A V5 region spans residues 454 to 460 (NQTNITF). The segment at 503–523 (GVFVLGFLGFLATAGSAMGAA) is fusion peptide. The tract at residues 566–582 (LQARVTAIEKYLKDQAQ) is immunosuppression. Asn-602, Asn-611, and Asn-627 each carry an N-linked (GlcNAc...) asparagine; by host glycan. A coiled-coil region spans residues 615–636 (QEWEKQVRYLEANISQSLEQAQ). The MPER; binding to GalCer stretch occupies residues 648–669 (KLNSWDVFGNWFDLTSWIKYIQ). The chain crosses the membrane as a helical span at residues 671–691 (GVYIVVGVIVLRIAIYIVQLL). The Cytoplasmic portion of the chain corresponds to 692–738 (SRLRKGYRPVFSSPPGYLQQIHIHTDRGQPANEGTEEDDRDDDGYDL). The YXXV motif; contains endocytosis signal motif lies at 698–701 (YRPV). A disordered region spans residues 716 to 738 (TDRGQPANEGTEEDDRDDDGYDL). Positions 725–738 (GTEEDDRDDDGYDL) are enriched in acidic residues.

As to quaternary structure, the mature envelope protein (Env) consists of a homotrimer of non-covalently associated gp120-gp41 heterodimers. The resulting complex protrudes from the virus surface as a spike. There seems to be as few as 10 spikes on the average virion. Interacts with human CD4, CCR5 and CXCR4, to form a P4HB/PDI-CD4-CXCR4-gp120 complex. Gp120 also interacts with the C-type lectins CD209/DC-SIGN and CLEC4M/DC-SIGNR (collectively referred to as DC-SIGN(R)). Gp120 and gp41 interact with GalCer. In terms of assembly, the mature envelope protein (Env) consists of a homotrimer of non-covalently associated gp120-gp41 heterodimers. The resulting complex protrudes from the virus surface as a spike. There seems to be as few as 10 spikes on the average virion. Specific enzymatic cleavages in vivo yield mature proteins. Envelope glycoproteins are synthesized as an inactive precursor that is heavily N-glycosylated and processed likely by host cell furin in the Golgi to yield the mature SU and TM proteins. The cleavage site between SU and TM requires the minimal sequence [KR]-X-[KR]-R. In terms of processing, palmitoylation of the transmembrane protein and of Env polyprotein (prior to its proteolytic cleavage) is essential for their association with host cell membrane lipid rafts. Palmitoylation is therefore required for envelope trafficking to classical lipid rafts, but not for viral replication.

The protein resides in the virion membrane. The protein localises to the host cell membrane. Its subcellular location is the host endosome membrane. Functionally, the surface protein gp120 (SU) attaches the virus to the host lymphoid cell by binding to the primary receptor CD4. This interaction induces a structural rearrangement creating a high affinity binding site for a chemokine coreceptor like CXCR4 and/or CCR5. This peculiar 2 stage receptor-interaction strategy allows gp120 to maintain the highly conserved coreceptor-binding site in a cryptic conformation, protected from neutralizing antibodies. Since CD4 also displays a binding site for the disulfide-isomerase P4HB/PDI, a P4HB/PDI-CD4-CXCR4-gp120 complex may form. In that complex, P4HB/PDI could reach and reduce gp120 disulfide bonds, causing major conformational changes in gp120. TXN, another PDI family member could also be involved in disulfide rearrangements in Env during fusion. These changes are transmitted to the transmembrane protein gp41 and are thought to activate its fusogenic potential by unmasking its fusion peptide. In terms of biological role, the surface protein gp120 is a ligand for CD209/DC-SIGN and CLEC4M/DC-SIGNR, which are respectively found on dendritic cells (DCs), and on endothelial cells of liver sinusoids and lymph node sinuses. These interactions allow capture of viral particles at mucosal surfaces by these cells and subsequent transmission to permissive cells. DCs are professional antigen presenting cells, critical for host immunity by inducing specific immune responses against a broad variety of pathogens. They act as sentinels in various tissues where they take up antigen, process it, and present it to T-cells following migration to lymphoid organs. HIV subverts the migration properties of dendritic cells to gain access to CD4+ T-cells in lymph nodes. Virus transmission to permissive T-cells occurs either in trans (without DCs infection, through viral capture and transmission), or in cis (following DCs productive infection, through the usual CD4-gp120 interaction), thereby inducing a robust infection. In trans infection, bound virions remain infectious over days and it is proposed that they are not degraded, but protected in non-lysosomal acidic organelles within the DCs close to the cell membrane thus contributing to the viral infectious potential during DCs' migration from the periphery to the lymphoid tissues. On arrival at lymphoid tissues, intact virions recycle back to DCs' cell surface allowing virus transmission to CD4+ T-cells. Virion capture also seems to lead to MHC-II-restricted viral antigen presentation, and probably to the activation of HIV-specific CD4+ cells. The transmembrane protein gp41 (TM) acts as a class I viral fusion protein. Under the current model, the protein has at least 3 conformational states: pre-fusion native state, pre-hairpin intermediate state, and post-fusion hairpin state. During fusion of viral and target intracellular membranes, the coiled coil regions (heptad repeats) assume a trimer-of-hairpins structure, positioning the fusion peptide in close proximity to the C-terminal region of the ectodomain. The formation of this structure appears to drive apposition and subsequent fusion of viral and target cell membranes. Complete fusion occurs in host cell endosomes and is dynamin-dependent, however some lipid transfer might occur at the plasma membrane. The virus undergoes clathrin-dependent internalization long before endosomal fusion, thus minimizing the surface exposure of conserved viral epitopes during fusion and reducing the efficacy of inhibitors targeting these epitopes. Membranes fusion leads to delivery of the nucleocapsid into the cytoplasm. Its function is as follows. The envelope glycoprotein gp160 precursor down-modulates cell surface CD4 antigen by interacting with it in the endoplasmic reticulum and blocking its transport to the cell surface. Functionally, the gp120-gp41 heterodimer seems to contribute to T-cell depletion during HIV-1 infection. The envelope glycoproteins expressed on the surface of infected cells induce apoptosis through an interaction with uninfected cells expressing the receptor (CD4) and the coreceptors CXCR4 or CCR5. This type of bystander killing may be obtained by at least three distinct mechanisms. First, the interaction between the 2 cells can induce cellular fusion followed by nuclear fusion within the syncytium. Syncytia are condemned to die from apoptosis. Second, the 2 interacting cells may not fuse entirely and simply exchange plasma membrane lipids, after a sort of hemifusion process, followed by rapid death. Third, it is possible that virus-infected cells, on the point of undergoing apoptosis, fuse with CD4-expressing cells, in which case apoptosis is rapidly transmitted from one cell to the other and thus occurs in a sort of contagious fashion. In terms of biological role, the gp120-gp41 heterodimer allows rapid transcytosis of the virus through CD4 negative cells such as simple epithelial monolayers of the intestinal, rectal and endocervical epithelial barriers. Both gp120 and gp41 specifically recognize glycosphingolipids galactosyl-ceramide (GalCer) or 3' sulfo-galactosyl-ceramide (GalS) present in the lipid rafts structures of epithelial cells. Binding to these alternative receptors allows the rapid transcytosis of the virus through the epithelial cells. This transcytotic vesicle-mediated transport of virions from the apical side to the basolateral side of the epithelial cells does not involve infection of the cells themselves. The sequence is that of Envelope glycoprotein gp160 (env) from Human immunodeficiency virus type 2 subtype A (isolate Ghana-1) (HIV-2).